The sequence spans 91 residues: Large ribosomal subunit protein uL23 (91 aa).

It belongs to the universal ribosomal protein uL23 family. In terms of assembly, part of the 50S ribosomal subunit. Contacts protein L29, and trigger factor when it is bound to the ribosome.

Functionally, one of the early assembly proteins it binds 23S rRNA. One of the proteins that surrounds the polypeptide exit tunnel on the outside of the ribosome. Forms the main docking site for trigger factor binding to the ribosome. This chain is Large ribosomal subunit protein uL23, found in Staphylococcus haemolyticus (strain JCSC1435).